The primary structure comprises 664 residues: CRISPR-associated DNA-binding protein Cas12m (664 aa).

The recognition domain (REC1-N) stretch occupies residues 1–137; it reads MKRVTITIDG…AKYRELIGSD (137 aa). The tract at residues 138–212 is recognition domain (REC2); sequence EETAQMDTEI…AAKDRIRAAG (75 aa). The interval 213–270 is recognition domain (REC1-C); the sequence is NDIENLEKDRQAAVIKAYNNSGLWWGNYNAVLESYKKARIKALKDGAELKYHRFDGSG. The interval 271–390 is wedge domain (WED); it reads RFTNQIQGGM…VWSVVFTFTT (120 aa). Residues 391 to 404 form a linker region; that stretch reads DCPTYDQRSSTGNR. The tract at residues 405–618 is ruvC-I; that stretch reads CGLNLGWKKQ…KNGTQIEQVS (214 aa). The interval 618 to 650 is target nucleic-acid binding (TNB); sequence STASSATCSACKGKMEQVDGIMWRCRECRALVD. Cys-625, Cys-628, Cys-642, and Cys-645 together coordinate Zn(2+). Residues 651–664 are ruvC-II; that stretch reads QDINAAANLFREVL. Asp-652 lines the Mg(2+) pocket.

Belongs to the CRISPR-associated DNA-binding protein Cas12m family. Mg(2+) serves as cofactor. It depends on Zn(2+) as a cofactor.

CRISPR (clustered regularly interspaced short palindromic repeat), is an adaptive immune system that provides protection against mobile genetic elements (viruses, transposable elements and conjugative plasmids). CRISPR clusters contain sequences complementary to antecedent mobile elements and target invading nucleic acids. CRISPR clusters are transcribed and processed into CRISPR RNA (crRNA). Recognizes a short motif in the CRISPR repeat sequences (the 5' PAM or protospacer adjacent motif, 5'-CCN-3' in this organism) to help distinguish self versus nonself, as targets within the bacterial CRISPR locus do not have PAMs. Cas12m-crRNA binds DNA in a PAM-dependent, crRNA-guided fashion. DNA-binding probably inhibits transcription, leading to gene silencing. Upon expression in E.coli as a CRISPR region preferentially binds to its associated crRNA. Probably required for pre-crRNA processing to mature crRNA. This is CRISPR-associated DNA-binding protein Cas12m from Pelobacter propionicus (strain DSM 2379 / NBRC 103807 / OttBd1).